The sequence spans 768 residues: DNA topoisomerase 4 subunit A (768 aa).

The region spanning 38–521 (LPEVSDGQKP…AGRAVLTQTA (484 aa)) is the Topo IIA-type catalytic domain. Residue Tyr-126 is the O-(5'-phospho-DNA)-tyrosine intermediate of the active site.

This sequence belongs to the type II topoisomerase GyrA/ParC subunit family. ParC type 1 subfamily. In terms of assembly, heterotetramer composed of ParC and ParE.

It localises to the cell membrane. It carries out the reaction ATP-dependent breakage, passage and rejoining of double-stranded DNA.. In terms of biological role, topoisomerase IV is essential for chromosome segregation. It relaxes supercoiled DNA. Performs the decatenation events required during the replication of a circular DNA molecule. In Neisseria gonorrhoeae, this protein is DNA topoisomerase 4 subunit A.